The sequence spans 1573 residues: Pentafunctional AROM polypeptide 1 (1573 aa).

A 3-dehydroquinate synthase region spans residues methionine 1–asparagine 380. NAD(+)-binding positions include aspartate 44 to asparagine 46, glutamate 81 to lysine 84, glycine 112 to valine 114, and aspartate 117. Arginine 128 lines the 7-phospho-2-dehydro-3-deoxy-D-arabino-heptonate pocket. Threonine 137–threonine 138 lines the NAD(+) pocket. 7-phospho-2-dehydro-3-deoxy-D-arabino-heptonate contacts are provided by aspartate 144 and lysine 150. Residue lysine 159 coordinates NAD(+). Asparagine 160 provides a ligand contact to 7-phospho-2-dehydro-3-deoxy-D-arabino-heptonate. NAD(+) is bound by residues phenylalanine 177 to threonine 180 and asparagine 188. Glutamate 192 contributes to the Zn(2+) binding site. Residues glutamate 192 to lysine 195 and lysine 246 each bind 7-phospho-2-dehydro-3-deoxy-D-arabino-heptonate. Glutamate 256 acts as the Proton acceptor; for 3-dehydroquinate synthase activity in catalysis. 7-phospho-2-dehydro-3-deoxy-D-arabino-heptonate contacts are provided by residues arginine 260–asparagine 264 and histidine 267. Residue histidine 267 participates in Zn(2+) binding. Histidine 271 serves as the catalytic Proton acceptor; for 3-dehydroquinate synthase activity. 7-phospho-2-dehydro-3-deoxy-D-arabino-heptonate-binding residues include histidine 283 and lysine 352. Histidine 283 is a Zn(2+) binding site. The EPSP synthase stretch occupies residues valine 393 to valine 838. Catalysis depends on cysteine 820, which acts as the For EPSP synthase activity. A shikimate kinase region spans residues aspartate 859–serine 1051. Glycine 866–threonine 873 provides a ligand contact to ATP. Positions leucine 1052–glutamate 1273 are 3-dehydroquinase. Catalysis depends on histidine 1175, which acts as the Proton acceptor; for 3-dehydroquinate dehydratase activity. Lysine 1203 functions as the Schiff-base intermediate with substrate; for 3-dehydroquinate dehydratase activity in the catalytic mechanism. The interval alanine 1286–lysine 1573 is shikimate dehydrogenase.

It in the N-terminal section; belongs to the sugar phosphate cyclases superfamily. Dehydroquinate synthase family. This sequence in the 2nd section; belongs to the EPSP synthase family. In the 3rd section; belongs to the shikimate kinase family. The protein in the 4th section; belongs to the type-I 3-dehydroquinase family. It in the C-terminal section; belongs to the shikimate dehydrogenase family. As to quaternary structure, homodimer. Zn(2+) serves as cofactor.

The protein localises to the cytoplasm. It carries out the reaction 7-phospho-2-dehydro-3-deoxy-D-arabino-heptonate = 3-dehydroquinate + phosphate. The catalysed reaction is 3-dehydroquinate = 3-dehydroshikimate + H2O. The enzyme catalyses shikimate + NADP(+) = 3-dehydroshikimate + NADPH + H(+). It catalyses the reaction shikimate + ATP = 3-phosphoshikimate + ADP + H(+). It carries out the reaction 3-phosphoshikimate + phosphoenolpyruvate = 5-O-(1-carboxyvinyl)-3-phosphoshikimate + phosphate. Its pathway is metabolic intermediate biosynthesis; chorismate biosynthesis; chorismate from D-erythrose 4-phosphate and phosphoenolpyruvate: step 2/7. The protein operates within metabolic intermediate biosynthesis; chorismate biosynthesis; chorismate from D-erythrose 4-phosphate and phosphoenolpyruvate: step 3/7. It participates in metabolic intermediate biosynthesis; chorismate biosynthesis; chorismate from D-erythrose 4-phosphate and phosphoenolpyruvate: step 4/7. It functions in the pathway metabolic intermediate biosynthesis; chorismate biosynthesis; chorismate from D-erythrose 4-phosphate and phosphoenolpyruvate: step 5/7. Its pathway is metabolic intermediate biosynthesis; chorismate biosynthesis; chorismate from D-erythrose 4-phosphate and phosphoenolpyruvate: step 6/7. Functionally, the AROM polypeptide catalyzes 5 consecutive enzymatic reactions in prechorismate polyaromatic amino acid biosynthesis. This chain is Pentafunctional AROM polypeptide 1, found in Talaromyces marneffei (strain ATCC 18224 / CBS 334.59 / QM 7333) (Penicillium marneffei).